A 90-amino-acid chain; its full sequence is Small ribosomal subunit protein bS16 (90 aa).

This sequence belongs to the bacterial ribosomal protein bS16 family.

The sequence is that of Small ribosomal subunit protein bS16 from Lactobacillus gasseri (strain ATCC 33323 / DSM 20243 / BCRC 14619 / CIP 102991 / JCM 1131 / KCTC 3163 / NCIMB 11718 / NCTC 13722 / AM63).